A 353-amino-acid chain; its full sequence is MSHILDKIDTVYPFPPKPIPLTQDEKAAYIASIKQLLKEKDAVLIAHYYTDPEIQALAEETGGFVGDSLEMAKFGNRHPAGTLIIAGVRFMGESAKILTPEKRILMPTLEAECSLDLGCPADKFTEFCDAHPDHTVVVYANTSAAVKARADWVVTSSIALEIVEHLDAEDKPIIWGPDRHLGSYIANKTGADMLLWQGECVVHDEFSADALRKMKAVYPDAAILVHPESPASVVELADAVGSTSQLIKAAKELPQQKMIVATDKGIFFKMQQLVPEKELIEAPTAGAGATCRSCAHCPWMAMNGLKAIETALREGGEQHEIFVDEALRVKSLIPLNRMLDFAEKLNMQVKGNV.

Residues H47 and S68 each contribute to the iminosuccinate site. C113 contacts [4Fe-4S] cluster. Residues 139-141 (YAN) and S156 each bind iminosuccinate. C200 lines the [4Fe-4S] cluster pocket. Iminosuccinate contacts are provided by residues 226–228 (HPE) and T243. Residue C297 coordinates [4Fe-4S] cluster.

This sequence belongs to the quinolinate synthase family. Type 1 subfamily. [4Fe-4S] cluster serves as cofactor.

Its subcellular location is the cytoplasm. It carries out the reaction iminosuccinate + dihydroxyacetone phosphate = quinolinate + phosphate + 2 H2O + H(+). The protein operates within cofactor biosynthesis; NAD(+) biosynthesis; quinolinate from iminoaspartate: step 1/1. In terms of biological role, catalyzes the condensation of iminoaspartate with dihydroxyacetone phosphate to form quinolinate. The polypeptide is Quinolinate synthase (Vibrio vulnificus (strain YJ016)).